A 606-amino-acid chain; its full sequence is Atypical protein kinase C (606 aa).

The PB1 domain maps to 30 to 113 (SITVKTAYNG…SQLVIHVFPN (84 aa)). The Phorbol-ester/DAG-type zinc-finger motif lies at 145-195 (GHIFQAKRFNRRAFCAYCQDRIWGLGRQGFKCIQCKLLVHKKCHKLVQKHC). The Protein kinase domain occupies 264-532 (FELIRVIGRG…FMDIVSHPFF (269 aa)). ATP is bound by residues 270-278 (IGRGSYAKV) and K293. D388 acts as the Proton acceptor in catalysis. Residues 533–604 (KNMDWELLER…VNPLLMSLED (72 aa)) enclose the AGC-kinase C-terminal domain.

The protein belongs to the protein kinase superfamily. AGC Ser/Thr protein kinase family. PKC subfamily. As to quaternary structure, interacts with baz; the interaction is required for apical localization of aPKC in neuroblasts and epithelial cells. Interacts with Dap160; the interaction promotes aPKC apical localization and kinase activity. Interacts with and phosphorylates l(2)gl and yrt. Interacts with crb and ref(2)P. Forms a complex with baz, fz and Patj. In terms of tissue distribution, expressed in the testis. In spermatid cysts, localizes near the tips of spermatid flagellar axonemes (at protein level). Detectable in freshly laid eggs before onset of zygotic transcription so is deposited in the egg during oogenesis. At the cellular blastoderm stage, present in all cells except the pole cells. During gastrulation, strongly expressed in tissues undergoing morphogenetic movements such as invaginating mesoderm, proctodeum and cephalic furrow. Strongly expressed in neuroblasts.

Its subcellular location is the cytoplasm. It is found in the cell cortex. The protein resides in the apicolateral cell membrane. The catalysed reaction is L-seryl-[protein] + ATP = O-phospho-L-seryl-[protein] + ADP + H(+). The enzyme catalyses L-threonyl-[protein] + ATP = O-phospho-L-threonyl-[protein] + ADP + H(+). Its function is as follows. Serine/threonine protein kinase which is required for apico-basal cell polarity in the germ line as well as in epithelial and neural precursor cells, for epithelial planar cell polarity and for cell proliferation. During oocyte development, required for the posterior translocation of oocyte specification factors and for the posterior establishment of the microtubule organizing center within the presumptive oocyte. Phosphorylates l(2)gl which restricts l(2)gl activity to the oocyte posterior and regulates posterior enrichment of par-1, leading to establishment of correct oocyte polarity. Essential for apical localization of l(2)gl and par-6 in neuroblasts and for exclusion of mira from the apical cortex. Phosphorylates baz which is required for targeting of baz to the postsynaptic region where it is involved in actin organization, and for apical exclusion of baz which is necessary for establishment of the apical/lateral border in epithelial cells. Phosphorylates yrt which prevents its premature apical localization and is necessary for correct epithelial cell polarization. Required for the establishment of mitotic spindle orientation during symmetric division of epithelial cells and for apical exclusion of raps/Pins. Involved in symmetric adherens junction positioning during embryogenesis. Required for polarization of the spermatid cyst which is necessary for sperm differentiation. Required for stimulation of the Toll signaling pathway which activates Dif and dl and plays a role in innate immunity. Plays a role in memory enhancement. The sequence is that of Atypical protein kinase C from Drosophila melanogaster (Fruit fly).